The chain runs to 1179 residues: DNA-directed RNA polymerase subunit beta' (1179 aa).

Residues Cys-60, Cys-62, Cys-75, and Cys-78 each contribute to the Zn(2+) site. Positions 449, 451, and 453 each coordinate Mg(2+). Residues Cys-796, Cys-871, Cys-878, and Cys-881 each coordinate Zn(2+).

This sequence belongs to the RNA polymerase beta' chain family. As to quaternary structure, the RNAP catalytic core consists of 2 alpha, 1 beta, 1 beta' and 1 omega subunit. When a sigma factor is associated with the core the holoenzyme is formed, which can initiate transcription. The cofactor is Mg(2+). Requires Zn(2+) as cofactor.

It carries out the reaction RNA(n) + a ribonucleoside 5'-triphosphate = RNA(n+1) + diphosphate. In terms of biological role, DNA-dependent RNA polymerase catalyzes the transcription of DNA into RNA using the four ribonucleoside triphosphates as substrates. The protein is DNA-directed RNA polymerase subunit beta' of Symbiobacterium thermophilum (strain DSM 24528 / JCM 14929 / IAM 14863 / T).